The sequence spans 329 residues: GTP 3',8-cyclase (329 aa).

Positions 8–234 (AFARKFYYLR…QLRQRSDGPA (227 aa)) constitute a Radical SAM core domain. Arg-17 lines the GTP pocket. [4Fe-4S] cluster-binding residues include Cys-24 and Cys-28. Tyr-30 serves as a coordination point for S-adenosyl-L-methionine. Cys-31 lines the [4Fe-4S] cluster pocket. Position 68 (Arg-68) interacts with GTP. Position 72 (Gly-72) interacts with S-adenosyl-L-methionine. Thr-99 contributes to the GTP binding site. Ser-123 lines the S-adenosyl-L-methionine pocket. Lys-160 contacts GTP. An S-adenosyl-L-methionine-binding site is contributed by Met-194. Cys-257 and Cys-260 together coordinate [4Fe-4S] cluster. A GTP-binding site is contributed by 262 to 264 (RLR). Cys-274 is a [4Fe-4S] cluster binding site.

The protein belongs to the radical SAM superfamily. MoaA family. In terms of assembly, monomer and homodimer. Requires [4Fe-4S] cluster as cofactor.

The enzyme catalyses GTP + AH2 + S-adenosyl-L-methionine = (8S)-3',8-cyclo-7,8-dihydroguanosine 5'-triphosphate + 5'-deoxyadenosine + L-methionine + A + H(+). It functions in the pathway cofactor biosynthesis; molybdopterin biosynthesis. In terms of biological role, catalyzes the cyclization of GTP to (8S)-3',8-cyclo-7,8-dihydroguanosine 5'-triphosphate. The polypeptide is GTP 3',8-cyclase (Escherichia coli O45:K1 (strain S88 / ExPEC)).